The sequence spans 198 residues: N-acetyltransferase 9-like protein (198 aa).

Positions 14–186 constitute an N-acetyltransferase domain; it reads IILVPYKEKH…SNNFTNLTAD (173 aa).

It belongs to the acetyltransferase family. GNAT subfamily.

The polypeptide is N-acetyltransferase 9-like protein (nat9) (Nematostella vectensis (Starlet sea anemone)).